Consider the following 301-residue polypeptide: Ribosomal RNA small subunit methyltransferase H (301 aa).

S-adenosyl-L-methionine-binding positions include 31-33 (GGY), Asp49, Phe76, Asp97, and Gln104.

This sequence belongs to the methyltransferase superfamily. RsmH family.

The protein localises to the cytoplasm. The enzyme catalyses cytidine(1402) in 16S rRNA + S-adenosyl-L-methionine = N(4)-methylcytidine(1402) in 16S rRNA + S-adenosyl-L-homocysteine + H(+). Specifically methylates the N4 position of cytidine in position 1402 (C1402) of 16S rRNA. The protein is Ribosomal RNA small subunit methyltransferase H of Ehrlichia ruminantium (strain Welgevonden).